Here is an 85-residue protein sequence, read N- to C-terminus: Cell division topological specificity factor (85 aa).

It belongs to the MinE family.

In terms of biological role, prevents the cell division inhibition by proteins MinC and MinD at internal division sites while permitting inhibition at polar sites. This ensures cell division at the proper site by restricting the formation of a division septum at the midpoint of the long axis of the cell. This Shewanella oneidensis (strain ATCC 700550 / JCM 31522 / CIP 106686 / LMG 19005 / NCIMB 14063 / MR-1) protein is Cell division topological specificity factor.